The following is a 113-amino-acid chain: UPF0482 protein YnfB (113 aa).

An N-terminal signal peptide occupies residues 1–28; that stretch reads MNYTLSKRLCLTAMLTLAAVVYTTSAFA.

The protein belongs to the UPF0482 family.

This is UPF0482 protein YnfB from Salmonella arizonae (strain ATCC BAA-731 / CDC346-86 / RSK2980).